The chain runs to 652 residues: Acetyl-coenzyme A synthetase (652 aa).

Residues 191–194 and threonine 311 contribute to the CoA site; that span reads RAGN. ATP contacts are provided by residues 387 to 389, 411 to 416, aspartate 503, and arginine 518; these read GEP and DTWWQT. Serine 526 is a CoA binding site. Residue arginine 529 coordinates ATP. Mg(2+) contacts are provided by valine 540, histidine 542, and valine 545. Arginine 587 serves as a coordination point for CoA. Lysine 613 bears the N6-acetyllysine mark.

It belongs to the ATP-dependent AMP-binding enzyme family. Mg(2+) serves as cofactor. In terms of processing, acetylated. Deacetylation by the SIR2-homolog deacetylase activates the enzyme.

The enzyme catalyses acetate + ATP + CoA = acetyl-CoA + AMP + diphosphate. In terms of biological role, catalyzes the conversion of acetate into acetyl-CoA (AcCoA), an essential intermediate at the junction of anabolic and catabolic pathways. AcsA undergoes a two-step reaction. In the first half reaction, AcsA combines acetate with ATP to form acetyl-adenylate (AcAMP) intermediate. In the second half reaction, it can then transfer the acetyl group from AcAMP to the sulfhydryl group of CoA, forming the product AcCoA. This chain is Acetyl-coenzyme A synthetase, found in Marinomonas sp. (strain MWYL1).